A 567-amino-acid polypeptide reads, in one-letter code: Nucleolus and neural progenitor protein (567 aa).

Residue Ser-265 is modified to Phosphoserine. Positions 437-457 are disordered; the sequence is SKHHLRQRRSQNKFLRRQRKP. A nuclear localization signal region spans residues 442–460; sequence RQRRSQNKFLRRQRKPQRK.

The protein belongs to the nepro family.

The protein localises to the nucleus. It is found in the nucleolus. In terms of biological role, may play a role in cortex development as part of the Notch signaling pathway. Downstream of Notch may repress the expression of proneural genes and inhibit neuronal differentiation thereby maintaining neural progenitors. May also play a role in preimplentation embryo development. This Homo sapiens (Human) protein is Nucleolus and neural progenitor protein.